We begin with the raw amino-acid sequence, 315 residues long: Type II restriction enzyme SalI (315 aa).

The catalysed reaction is Endonucleolytic cleavage of DNA to give specific double-stranded fragments with terminal 5'-phosphates.. Functionally, a P subtype restriction enzyme that recognizes the double-stranded sequence 5'-GTCGAC-3' and cleaves after G-1. The protein is Type II restriction enzyme SalI of Streptomyces albus G.